Here is a 297-residue protein sequence, read N- to C-terminus: Large ribosomal subunit protein uL18 (297 aa).

Gly2 is modified (N-acetylglycine). Lys5 and Lys48 each carry N6-acetyllysine. Ser185 carries the phosphoserine modification. An N6-acetyllysine; alternate modification is found at Lys220. Lys220 is covalently cross-linked (Glycyl lysine isopeptide (Lys-Gly) (interchain with G-Cter in SUMO1); alternate). Lys220 is covalently cross-linked (Glycyl lysine isopeptide (Lys-Gly) (interchain with G-Cter in SUMO2); alternate). Thr232 is subject to Phosphothreonine. Positions 253 to 297 (YEKKPKKEVKKKRWNRPKMSLAQKKDRVAQKKASFLRAQERAAES) are disordered. Residues 258–268 (KKEVKKKRWNR) show a composition bias toward basic residues. Position 272 is a phosphoserine (Ser272).

It belongs to the universal ribosomal protein uL18 family. As to quaternary structure, component of the large ribosomal subunit (LSU). Part of the 5S RNP complex, which is a LSU subcomplex composed of the 5S RNA, RPL5 and RPL11. Component of a hexameric 5S RNP precursor complex, composed of 5S RNA, RRS1, RPF2/BXDC1, RPL5, RPL11 and HEATR3; this complex acts as a precursor for ribosome assembly. Interacts with NVL in an ATP-dependent manner. Interacts with RRP1B. Interacts with IPO5, IPO7 and KPNB1; these interactions may be involved in RPL5 nuclear import for the assembly of ribosomal subunits. Interacts with RRP1B.

Its subcellular location is the cytoplasm. The protein resides in the nucleus. It is found in the nucleolus. Its function is as follows. Component of the ribosome, a large ribonucleoprotein complex responsible for the synthesis of proteins in the cell. The small ribosomal subunit (SSU) binds messenger RNAs (mRNAs) and translates the encoded message by selecting cognate aminoacyl-transfer RNA (tRNA) molecules. The large subunit (LSU) contains the ribosomal catalytic site termed the peptidyl transferase center (PTC), which catalyzes the formation of peptide bonds, thereby polymerizing the amino acids delivered by tRNAs into a polypeptide chain. The nascent polypeptides leave the ribosome through a tunnel in the LSU and interact with protein factors that function in enzymatic processing, targeting, and the membrane insertion of nascent chains at the exit of the ribosomal tunnel. As part of the 5S RNP/5S ribonucleoprotein particle it is an essential component of the LSU, required for its formation and the maturation of rRNAs. It also couples ribosome biogenesis to p53/TP53 activation. As part of the 5S RNP it accumulates in the nucleoplasm and inhibits MDM2, when ribosome biogenesis is perturbed, mediating the stabilization and the activation of TP53. This is Large ribosomal subunit protein uL18 (RPL5) from Macaca fascicularis (Crab-eating macaque).